Consider the following 458-residue polypeptide: tRNA modification GTPase MnmE (458 aa).

Residues Arg30, Glu90, and Lys129 each contribute to the (6S)-5-formyl-5,6,7,8-tetrahydrofolate site. Residues 225–379 (GLSICLIGCP…LHQTIDTIIW (155 aa)) form the TrmE-type G domain. A K(+)-binding site is contributed by Asn235. Residues 235 to 240 (NVGKSS), 254 to 260 (SPIPGTT), and 279 to 282 (DTAG) each bind GTP. Ser239 is a binding site for Mg(2+). Residues Ser254, Ile256, and Thr259 each coordinate K(+). Mg(2+) is bound at residue Thr260. (6S)-5-formyl-5,6,7,8-tetrahydrofolate is bound at residue Lys458.

This sequence belongs to the TRAFAC class TrmE-Era-EngA-EngB-Septin-like GTPase superfamily. TrmE GTPase family. As to quaternary structure, homodimer. Heterotetramer of two MnmE and two MnmG subunits. It depends on K(+) as a cofactor.

The protein localises to the cytoplasm. Its function is as follows. Exhibits a very high intrinsic GTPase hydrolysis rate. Involved in the addition of a carboxymethylaminomethyl (cmnm) group at the wobble position (U34) of certain tRNAs, forming tRNA-cmnm(5)s(2)U34. In Protochlamydia amoebophila (strain UWE25), this protein is tRNA modification GTPase MnmE.